The following is a 242-amino-acid chain: UPF0246 protein SPN23F15130 (242 aa).

It belongs to the UPF0246 family.

The protein is UPF0246 protein SPN23F15130 of Streptococcus pneumoniae (strain ATCC 700669 / Spain 23F-1).